A 664-amino-acid chain; its full sequence is Glycine--tRNA ligase beta subunit (664 aa).

The protein belongs to the class-II aminoacyl-tRNA synthetase family. In terms of assembly, tetramer of two alpha and two beta subunits.

It localises to the cytoplasm. It catalyses the reaction tRNA(Gly) + glycine + ATP = glycyl-tRNA(Gly) + AMP + diphosphate. The chain is Glycine--tRNA ligase beta subunit from Rickettsia africae (strain ESF-5).